We begin with the raw amino-acid sequence, 131 residues long: Proteinase inhibitor (131 aa).

An N-terminal signal peptide occupies residues 1–26; sequence MSASAKLSRMVCLLCGFFSTGISMAS. A disulfide bridge connects residues cysteine 51 and cysteine 74.

The protein belongs to the protease inhibitor I38 family.

It is found in the periplasm. Inhibitor of the alkaline protease. It forms a non-covalent bond with the protease and may prevent its autocatalytic cleavage in the periplasm. The sequence is that of Proteinase inhibitor (inh) from Pseudomonas aeruginosa (strain ATCC 15692 / DSM 22644 / CIP 104116 / JCM 14847 / LMG 12228 / 1C / PRS 101 / PAO1).